The chain runs to 384 residues: Probable beta-1,3-galactosyltransferase 1 (384 aa).

The chain crosses the membrane as a helical; Signal-anchor for type II membrane protein span at residues 21–43 (SVFFMCLASFCLGMFFTNRMWNI). Residues asparagine 73 and asparagine 105 are each glycosylated (N-linked (GlcNAc...) asparagine).

The protein belongs to the glycosyltransferase 31 family. The cofactor is Mn(2+).

The protein localises to the golgi apparatus membrane. It participates in protein modification; protein glycosylation. Functionally, beta-1,3-galactosyltransferase that transfers galactose from UDP-galactose to substrates with a terminal glycosyl residue. This Arabidopsis thaliana (Mouse-ear cress) protein is Probable beta-1,3-galactosyltransferase 1 (B3GALT1).